The chain runs to 489 residues: Aerolysin (489 aa).

An N-terminal signal peptide occupies residues 1–24; sequence MMNRIITANLANLASSLMLAQVLG. Cystine bridges form between C44-C100 and C184-C189. Positions 70–86 are interaction with host N-linked glycan; sequence WQITGLADRWVIMGPGY. The part of the transmembrane beta-barrel after proteolytic activation of the toxin and insertion into the host membrane stretch occupies residues 257-289; it reads YSLSEKVTTKNKFQWPLVGETELAIEIAASQSW. The interval 347 to 356 is interaction with glycans from host GPI-anchor; sequence RWGGNAWYTH. Residues 445-489 constitute a propeptide that is removed on maturation; that stretch reads TRSAKAAQLRSASAEEVALTSVDLDSEALANEGFGNVSLTIVPVQ.

The protein belongs to the aerolysin family. In terms of assembly, homodimer in solution; homoheptamer in the host membrane. After binding to GPI-anchored proteins in target membranes and proteolytic removal of the C-terminal propeptide, the protein assembles into a heptameric pre-pore complex. A further conformation change leads to insertion into the host membrane. Proteolytic cleavage and subsequent release of the propeptide trigger a major conformation change, leading to the formation of a heptameric pre-pore that then inserts into the host membrane.

It is found in the secreted. It localises to the host cell membrane. Its function is as follows. Secreted, cytolytic toxin that forms pores in host membranes after proteolytic removal of a C-terminal propeptide, leading to destruction of the membrane permeability barrier and cell death. The pores are formed by transmembrane beta-strands and are approximately 3 nm in diameter. The polypeptide is Aerolysin (ash3) (Aeromonas salmonicida).